The primary structure comprises 439 residues: Protein disulfide-isomerase A6 (439 aa).

Positions 1–19 are cleaved as a signal peptide; it reads MARLGFGLVSCTFFLAASG. 2 Thioredoxin domains span residues 20–133 and 151–287; these read LYSS…ALRQ and QGRG…EDVA. Residues C55 and C58 each act as nucleophile in the active site. An intrachain disulfide couples C55 to C58. 3 positions are modified to phosphoserine: S129, S156, and S158. The segment at 141 to 160 is disordered; the sequence is GRSGGYSSGKQGRGDSSSKK. Active-site nucleophile residues include C190 and C193. Cysteines 190 and 193 form a disulfide. Residues 400-425 are disordered; that stretch reads GSFPAITAREPWDGRDGELPVEDDID. The residue at position 427 (S427) is a Phosphoserine. The short motif at 436-439 is the Prevents secretion from ER element; that stretch reads KDEL.

Belongs to the protein disulfide isomerase family. Part of a large chaperone multiprotein complex comprising DNAJB11, HSP90B1, HSPA5, HYOU, PDIA2, PDIA4, PDIA6, PPIB, SDF2L1, UGGT1 and very small amounts of ERP29, but not, or at very low levels, CALR nor CANX. Interacts with MICA on the surface of tumor cells, leading to MICA disulfide bond reduction which is required for its release from tumor cells. Interacts with ITGB3 following platelet stimulation. Interacts with ERN1; the interaction is direct. Interacts with EIF2AK3. Expressed most abundantly in lung and kidney, followed by heart, liver and brain.

The protein resides in the endoplasmic reticulum lumen. The protein localises to the cell membrane. It localises to the melanosome. The catalysed reaction is Catalyzes the rearrangement of -S-S- bonds in proteins.. May function as a chaperone that inhibits aggregation of misfolded proteins. Negatively regulates the unfolded protein response (UPR) through binding to UPR sensors such as ERN1, which in turn inactivates ERN1 signaling. May also regulate the UPR via the EIF2AK3 UPR sensor. Plays a role in platelet aggregation and activation by agonists such as convulxin, collagen and thrombin. The chain is Protein disulfide-isomerase A6 (PDIA6) from Mesocricetus auratus (Golden hamster).